Consider the following 362-residue polypeptide: Cobalt-precorrin-5B C(1)-methyltransferase (362 aa).

The protein belongs to the CbiD family.

The enzyme catalyses Co-precorrin-5B + S-adenosyl-L-methionine = Co-precorrin-6A + S-adenosyl-L-homocysteine. The protein operates within cofactor biosynthesis; adenosylcobalamin biosynthesis; cob(II)yrinate a,c-diamide from sirohydrochlorin (anaerobic route): step 6/10. Functionally, catalyzes the methylation of C-1 in cobalt-precorrin-5B to form cobalt-precorrin-6A. The sequence is that of Cobalt-precorrin-5B C(1)-methyltransferase from Burkholderia lata (strain ATCC 17760 / DSM 23089 / LMG 22485 / NCIMB 9086 / R18194 / 383).